The primary structure comprises 207 residues: Protein FAM177A1 (207 aa).

The residue at position 1 (Met-1) is an N-acetylmethionine. Ser-65 bears the Phosphoserine mark. Phosphothreonine is present on Thr-66. Residues 131–170 (IDEYYRMKKEEEEEEEENRMSEEAERQYQQNKLQADSIVQ) adopt a coiled-coil conformation. Positions 142 to 176 (EEEEEENRMSEEAERQYQQNKLQADSIVQTDQPET) are disordered. The segment covering 157 to 176 (QYQQNKLQADSIVQTDQPET) has biased composition (polar residues).

The protein belongs to the FAM177 family.

In Mus musculus (Mouse), this protein is Protein FAM177A1 (Fam177a1).